The chain runs to 487 residues: Cytochrome P450 monooxygenase pyvB (487 aa).

A helical membrane pass occupies residues 17–37 (PAYSSVVIGALVVCLVCLVWP). Heme is bound at residue Cys426.

Belongs to the cytochrome P450 family. Heme serves as cofactor.

It is found in the membrane. It functions in the pathway secondary metabolite biosynthesis. Its function is as follows. Cytochrome P450 monooxygenase; part of the gene cluster that mediates the biosynthesis of pyranoviolin A, a pyranonigrin analog with a C-3 methoxy group. Initially, the PKS portion of pyvA synthesizes C-10 carbon chain from 5 molecules of malonyl-CoA, which is then condensed with the thiolation (T) domain-bound glycine activated by the adenylation (A) domain. The subsequent chain release by Dieckmann condensation (DKC) could be catalyzed by the TE domain present at the C-terminus of pyvA and/or the alpha/beta hydrolase pyvD, installing the tetramic acid moiety. The FAD-dependent monooxygenase pyvC next epoxidizes one of the olefins of the polyketide part, and the epoxide ring-opening induces the dihydro-gamma-pyrone ring formation. The cytochrome P450 monooxygeanse pyvB would be responsible for the 2 consecutive reactions, in which the dihydro-gamma-pyrone is oxidized to gamma-pyrone and C-7 is hydroxylated to yield pyranonigrin F. Finally, the O-methyltransferase pyvH methylates the C-3 hydroxy group to complete the biosynthesis. The chain is Cytochrome P450 monooxygenase pyvB from Aspergillus violaceofuscus (strain CBS 115571).